The following is a 206-amino-acid chain: Large ribosomal subunit protein uL4 (206 aa).

Residues 63–96 (MYKQKGTGRARHHSARAPQFRGGGKAHGPVVRSH) are disordered. Over residues 64-77 (YKQKGTGRARHHSA) the composition is skewed to basic residues.

This sequence belongs to the universal ribosomal protein uL4 family. In terms of assembly, part of the 50S ribosomal subunit.

Functionally, one of the primary rRNA binding proteins, this protein initially binds near the 5'-end of the 23S rRNA. It is important during the early stages of 50S assembly. It makes multiple contacts with different domains of the 23S rRNA in the assembled 50S subunit and ribosome. Its function is as follows. Forms part of the polypeptide exit tunnel. This Allorhizobium ampelinum (strain ATCC BAA-846 / DSM 112012 / S4) (Agrobacterium vitis (strain S4)) protein is Large ribosomal subunit protein uL4.